We begin with the raw amino-acid sequence, 1657 residues long: Ras GTPase-activating-like protein IQGAP1 (1657 aa).

S2 carries the post-translational modification N-acetylserine. Residue S2 is modified to Phosphoserine. Residues 44–159 form the Calponin-homology (CH) domain; sequence LCHLEEAKRW…YCIHALSLYL (116 aa). Y172 carries the post-translational modification Phosphotyrosine. S330 is subject to Phosphoserine. Residues 685 to 710 enclose the WW domain; it reads WVKHWVKGGYHYYHNLETQAGGWAEP. 4 IQ domains span residues 745 to 774, 775 to 804, 805 to 834, and 835 to 864; these read NEGL…FLKK, QIPA…YLHS, HKDE…YFRD, and HIND…AEDP. The C1 stretch occupies residues 956–1274; sequence GGLKALSKEK…FFQVACDVPE (319 aa). In terms of domain architecture, Ras-GAP spans 1020 to 1269; it reads YLLLRLFQTA…QKFRRFFQVA (250 aa). The segment at 1276–1657 is C2; it reads QDKFNVDEYS…FLLNKKFYGK (382 aa). At S1441 the chain carries Phosphoserine.

In terms of assembly, interacts with CDC42; the interaction is demonstrated with IQGAP1 in GTP-bound and in nucleotide-free state. Interacts with RAC1. Does not interact with RHOA. Interacts with TSG101. Interacts with PAK6. Interacts with SASH1. Interacts with PJVK. Interacts with SLC26A4. This interaction enhances the chloride-bicarbonate exchange activity of SLC26A4. Interacts with SVEP1. Interacts with ILK; the interaction is required for localization of IQGAP to the cell cortex. As to quaternary structure, (Microbial infection) In case of infection, interacts with S.typhimurium protein sseI. Expressed in the kidney (at protein level).

Its subcellular location is the cell membrane. It is found in the nucleus. It localises to the cytoplasm. The protein resides in the cell cortex. The protein localises to the apical cell membrane. Its subcellular location is the basolateral cell membrane. Functionally, plays a crucial role in regulating the dynamics and assembly of the actin cytoskeleton. Recruited to the cell cortex by interaction with ILK which allows it to cooperate with its effector DIAPH1 to locally stabilize microtubules and allow stable insertion of caveolae into the plasma membrane. Binds to activated CDC42 but does not stimulate its GTPase activity. Associates with calmodulin. May promote neurite outgrowth. May play a possible role in cell cycle regulation by contributing to cell cycle progression after DNA replication arrest. The chain is Ras GTPase-activating-like protein IQGAP1 (Iqgap1) from Mus musculus (Mouse).